Reading from the N-terminus, the 298-residue chain is HTH-type transcriptional regulator YhaJ (298 aa).

One can recognise an HTH lysR-type domain in the interval leucine 7 to threonine 64. The H-T-H motif DNA-binding region spans phenylalanine 24–glutamine 43.

This sequence belongs to the LysR transcriptional regulatory family.

Functionally, positive regulator partially required for expression of genes in the locus of effacement (LEE) large pathogenicity island (PAI). Also partially responsible for expression of neighboring gene dlsT (yhaO) during late exponential growth. Binds to DNA of promoter 1 in LEE and DNA from the dlsT promoter region. The sequence is that of HTH-type transcriptional regulator YhaJ (yhaJ) from Escherichia coli O157:H7.